A 108-amino-acid chain; its full sequence is FK506-binding protein 1A (108 aa).

The interval 1-20 (MGVEVQRISPGDGKNFPKPG) is disordered. The PPIase FKBP-type domain occupies 20–108 (GDTVSIHYTG…TFEVELLKIN (89 aa)).

Belongs to the FKBP-type PPIase family. FKBP1 subfamily.

Its subcellular location is the cytoplasm. The enzyme catalyses [protein]-peptidylproline (omega=180) = [protein]-peptidylproline (omega=0). Inhibited by both FK506 and rapamycin. PPIases accelerate the folding of proteins. It catalyzes the cis-trans isomerization of proline imidic peptide bonds in oligopeptides. The sequence is that of FK506-binding protein 1A (fprA) from Emericella nidulans (strain FGSC A4 / ATCC 38163 / CBS 112.46 / NRRL 194 / M139) (Aspergillus nidulans).